Consider the following 935-residue polypeptide: Isoleucine--tRNA ligase (935 aa).

The short motif at 58–68 (PYANGSIHVGH) is the 'HIGH' region element. Glutamate 558 contacts L-isoleucyl-5'-AMP. The 'KMSKS' region signature appears at 599-603 (KMSKS). Lysine 602 contacts ATP. Zn(2+)-binding residues include cysteine 897, cysteine 900, cysteine 917, and cysteine 920.

Belongs to the class-I aminoacyl-tRNA synthetase family. IleS type 1 subfamily. In terms of assembly, monomer. It depends on Zn(2+) as a cofactor.

It is found in the cytoplasm. The catalysed reaction is tRNA(Ile) + L-isoleucine + ATP = L-isoleucyl-tRNA(Ile) + AMP + diphosphate. Catalyzes the attachment of isoleucine to tRNA(Ile). As IleRS can inadvertently accommodate and process structurally similar amino acids such as valine, to avoid such errors it has two additional distinct tRNA(Ile)-dependent editing activities. One activity is designated as 'pretransfer' editing and involves the hydrolysis of activated Val-AMP. The other activity is designated 'posttransfer' editing and involves deacylation of mischarged Val-tRNA(Ile). The chain is Isoleucine--tRNA ligase from Francisella tularensis subsp. novicida (strain U112).